A 291-amino-acid chain; its full sequence is ATP phosphoribosyltransferase (291 aa).

This sequence belongs to the ATP phosphoribosyltransferase family. Long subfamily. It depends on Mg(2+) as a cofactor.

It is found in the cytoplasm. It catalyses the reaction 1-(5-phospho-beta-D-ribosyl)-ATP + diphosphate = 5-phospho-alpha-D-ribose 1-diphosphate + ATP. The protein operates within amino-acid biosynthesis; L-histidine biosynthesis; L-histidine from 5-phospho-alpha-D-ribose 1-diphosphate: step 1/9. With respect to regulation, feedback inhibited by histidine. Its function is as follows. Catalyzes the condensation of ATP and 5-phosphoribose 1-diphosphate to form N'-(5'-phosphoribosyl)-ATP (PR-ATP). Has a crucial role in the pathway because the rate of histidine biosynthesis seems to be controlled primarily by regulation of HisG enzymatic activity. The sequence is that of ATP phosphoribosyltransferase from Desulfosudis oleivorans (strain DSM 6200 / JCM 39069 / Hxd3) (Desulfococcus oleovorans).